The sequence spans 145 residues: Phosphoribosyl-AMP cyclohydrolase (145 aa).

Residue Asp87 coordinates Mg(2+). A Zn(2+)-binding site is contributed by Cys88. Residues Asp89 and Asp91 each contribute to the Mg(2+) site. Residues Cys104 and Cys111 each contribute to the Zn(2+) site.

It belongs to the PRA-CH family. As to quaternary structure, homodimer. It depends on Mg(2+) as a cofactor. Zn(2+) is required as a cofactor.

The protein localises to the cytoplasm. The catalysed reaction is 1-(5-phospho-beta-D-ribosyl)-5'-AMP + H2O = 1-(5-phospho-beta-D-ribosyl)-5-[(5-phospho-beta-D-ribosylamino)methylideneamino]imidazole-4-carboxamide. It functions in the pathway amino-acid biosynthesis; L-histidine biosynthesis; L-histidine from 5-phospho-alpha-D-ribose 1-diphosphate: step 3/9. Its function is as follows. Catalyzes the hydrolysis of the adenine ring of phosphoribosyl-AMP. In Nitrobacter winogradskyi (strain ATCC 25391 / DSM 10237 / CIP 104748 / NCIMB 11846 / Nb-255), this protein is Phosphoribosyl-AMP cyclohydrolase.